The chain runs to 37 residues: Large ribosomal subunit protein bL36 (37 aa).

The protein belongs to the bacterial ribosomal protein bL36 family.

This is Large ribosomal subunit protein bL36 from Francisella tularensis subsp. tularensis (strain FSC 198).